The primary structure comprises 95 residues: Co-chaperonin GroES (95 aa).

The protein belongs to the GroES chaperonin family. Heptamer of 7 subunits arranged in a ring. Interacts with the chaperonin GroEL.

It is found in the cytoplasm. Its function is as follows. Together with the chaperonin GroEL, plays an essential role in assisting protein folding. The GroEL-GroES system forms a nano-cage that allows encapsulation of the non-native substrate proteins and provides a physical environment optimized to promote and accelerate protein folding. GroES binds to the apical surface of the GroEL ring, thereby capping the opening of the GroEL channel. In Ruegeria sp. (strain TM1040) (Silicibacter sp.), this protein is Co-chaperonin GroES.